Consider the following 849-residue polypeptide: Putative pentatricopeptide repeat-containing protein At5g08490 (849 aa).

PPR repeat units follow at residues 20–54 (DHRVFLDVVKACASVSDLTSGRALHGCVFKLGHIA), 55–89 (CSEVSKSVLNMYAKCRRMDDCQKMFRQMDSLDPVV), 121–155 (SSVTFAIVLPLCVRLGDSYNGKSMHSYIIKAGLEK), 156–187 (DTLVGNALVSMYAKFGFIFPDAYTAFDGIADK), 188–222 (DVVSWNAIIAGFSENNMMADAFRSFCLMLKEPTEP), 223–260 (NYATIANVLPVCASMDKNIACRSGRQIHSYVVQRSWLQ), 262–296 (HVFVCNSLVSFYLRVGRIEEAASLFTRMGSKDLVS), 297–327 (WNVVIAGYASNCEWFKAFQLFHNLVHKGDVS), 329–363 (DSVTIISILPVCAQLTDLASGKEIHSYILRHSYLL), 365–399 (DTSVGNALISFYARFGDTSAAYWAFSLMSTKDIIS), 400–430 (WNAILDAFADSPKQFQFLNLLHHLLNEAITL), 431–465 (DSVTILSLLKFCINVQGIGKVKEVHGYSVKAGLLH), 469–499 (EPKLGNALLDAYAKCGNVEYAHKIFLGLSER), 501–531 (TLVSYNSLLSGYVNSGSHDDAQMLFTEMSTT), 532–566 (DLTTWSLMVRIYAESCCPNEAIGVFREIQARGMRP), 567–597 (NTVTIMNLLPVCAQLASLHLVRQCHGYIIRG), 601–631 (DIRLKGTLLDVYAKCGSLKHAYSVFQSDARR), 632–666 (DLVMFTAMVAGYAVHGRGKEALMIYSHMTESNIKP), 667–702 (DHVFITTMLTACCHAGLIQDGLQIYDSIRTVHGMKP), and 703–733 (TMEQYACAVDLIARGGRLDDAYSFVTQMPVE). A type E motif region spans residues 738–813 (IWGTLLRACT…PAGCSWLEVD (76 aa)). Positions 814–844 (GQRNVFVSGDCSHPRRDSIFDLVNALYLQMK) are type E(+) motif.

It belongs to the PPR family. PCMP-E subfamily.

This Arabidopsis thaliana (Mouse-ear cress) protein is Putative pentatricopeptide repeat-containing protein At5g08490 (PCMP-E32).